Here is a 321-residue protein sequence, read N- to C-terminus: Arginine-hydroxylase NDUFAF5, mitochondrial (321 aa).

A mitochondrion-targeting transit peptide spans 1–25 (MNVSVKSLRGVSRTWRSFSSRQGMN).

The protein belongs to the methyltransferase superfamily. Interacts with NDUFS7.

It is found in the mitochondrion inner membrane. In terms of biological role, arginine hydroxylase that mediates hydroxylation of 'Arg-111' of NDUFS7 and is involved in the assembly of mitochondrial NADH:ubiquinone oxidoreductase complex (complex I, MT-ND1) at early stages. May also have methyltransferase activity. The polypeptide is Arginine-hydroxylase NDUFAF5, mitochondrial (Danio rerio (Zebrafish)).